The following is a 593-amino-acid chain: Scarecrow-like protein 1 (593 aa).

Disordered stretches follow at residues 29–61 and 188–216; these read NPKL…PCLT and YQNE…SKEV. Residues 35 to 48 show a composition bias toward polar residues; the sequence is LNENGNNNGVSSAQ. The span at 202 to 211 shows a compositional bias: low complexity; it reads SSSADSNSHV. One can recognise a GRAS domain in the interval 213–593; it reads SKEVVSQATP…KSLIVASAWR (381 aa). The interval 220-280 is leucine repeat I (LRI); sequence ATPKQILISC…AARMAASGKF (61 aa). Positions 299–364 are VHIID; sequence MQVLFEVCPC…GKRPRLRLTG (66 aa). The VHIID signature appears at 330–334; that stretch reads VHIID. Residues 380–411 are leucine repeat II (LRII); it reads IIGLRLEQLAEDNGVSFKFKAMPSKTSIVSPS. The PFYRE stretch occupies residues 421-515; that stretch reads LIVNFAFQLH…RQCLARDIVN (95 aa). The tract at residues 518-593 is SAW; sequence ACEGEERIER…KSLIVASAWR (76 aa).

It belongs to the GRAS family. As to expression, expressed in seedlings, roots, shoots, leaves, flowers and siliques.

Its subcellular location is the nucleus. Functionally, probable transcription factor involved in plant development. The sequence is that of Scarecrow-like protein 1 (SCL1) from Arabidopsis thaliana (Mouse-ear cress).